The chain runs to 119 residues: uncharacterized protein (119 aa).

The first 23 residues, 1–23 (MVKWAVSILVNALLLIVIDGYID), serve as a signal peptide directing secretion. 3 helical membrane passes run 27 to 47 (ISSIGAAIIASLILSILNVLI), 50 to 70 (LLIIFTLPVTMVTLGLFLFVI), and 88 to 108 (IDGFGTAIWASVILSVFHLLI).

The protein resides in the cell membrane. This is an uncharacterized protein from Bacillus subtilis (strain 168).